The following is a 108-amino-acid chain: Urease subunit beta (108 aa).

It belongs to the urease beta subunit family. As to quaternary structure, heterotrimer of UreA (gamma), UreB (beta) and UreC (alpha) subunits. Three heterotrimers associate to form the active enzyme.

The protein resides in the cytoplasm. It carries out the reaction urea + 2 H2O + H(+) = hydrogencarbonate + 2 NH4(+). It functions in the pathway nitrogen metabolism; urea degradation; CO(2) and NH(3) from urea (urease route): step 1/1. The polypeptide is Urease subunit beta (Trichormus variabilis (strain ATCC 29413 / PCC 7937) (Anabaena variabilis)).